We begin with the raw amino-acid sequence, 79 residues long: Acyl carrier protein (79 aa).

The 76-residue stretch at 2-77 (ADFEARVKEI…SAIDYVKTHV (76 aa)) folds into the Carrier domain. S37 is subject to O-(pantetheine 4'-phosphoryl)serine.

The protein belongs to the acyl carrier protein (ACP) family. In terms of processing, 4'-phosphopantetheine is transferred from CoA to a specific serine of apo-ACP by AcpS. This modification is essential for activity because fatty acids are bound in thioester linkage to the sulfhydryl of the prosthetic group.

Its subcellular location is the cytoplasm. It functions in the pathway lipid metabolism; fatty acid biosynthesis. Its function is as follows. Carrier of the growing fatty acid chain in fatty acid biosynthesis. This chain is Acyl carrier protein, found in Endomicrobium trichonymphae.